A 576-amino-acid chain; its full sequence is MSTSSLRRQMKNIVHNYSEAEIKVREATSNDPWGPSSSLMSEIADLTYNVVAFSEIMSMIWKRLNDHGKNWRHVYKAMTLMEYLIKTGSERVSQQCKENMYAVQTLKDFQYVDRDGKDQGVNVREKAKQLVALLRDEDRLREERAHALKTKEKLAQTATASSAAVGSGPPPEAEQAWPQSSGEEELQLQLALAMSKEEADQPPSCGPEDDAQLQLALSLSREEHDKEERIRRGDDLRLQMAIEESKRETGGKEESSLMDLADVFTAPAPAPTTDPWGGPAPMAAAVPTAAPTSDPWGGPPVPPAADPWGGPAPTPASGDPWRPAAPAGPSVDPWGGTPAPAAGEGPTPDPWGSSDGGVPVSGPSASDPWTPAPAFSDPWGGSPAKPSTNGTTAAGGFDTEPDEFSDFDRLRTALPTSGSSAGELELLAGEVPARSPGAFDMSGVRGSLAEAVGSPPPAATPTPTPPTRKTPESFLGPNAALVDLDSLVSRPGPTPPGAKASNPFLPGGGPATGPSVTNPFQPAPPATLTLNQLRLSPVPPVPGAPPTYISPLGGGPGLPPMMPPGPPAPNTNPFLL.

A 1,2-diacyl-sn-glycero-3-phospho-(1D-myo-inositol-4,5-bisphosphate) is bound by residues Arg-8, Lys-11, Arg-25, Asn-30, Arg-63, and His-73. Residues 12–144 (NIVHNYSEAE…RDEDRLREER (133 aa)) enclose the ENTH domain. The tract at residues 149-185 (KTKEKLAQTATASSAAVGSGPPPEAEQAWPQSSGEEE) is disordered. Residues 157 to 167 (TATASSAAVGS) are compositionally biased toward low complexity. 3 UIM domains span residues 183–202 (EEELQLQLALAMSKEEADQP), 208–227 (EDDAQLQLALSLSREEHDKE), and 233–252 (GDDLRLQMAIEESKRETGGK). The segment covering 265 to 296 (TAPAPAPTTDPWGGPAPMAAAVPTAAPTSDPW) has biased composition (low complexity). The interval 265 to 404 (TAPAPAPTTD…GGFDTEPDEF (140 aa)) is disordered. Repeat copies occupy residues 274-276 (DPW), 294-296 (DPW), 306-308 (DPW), 319-321 (DPW), 332-334 (DPW), 349-351 (DPW), 367-369 (DPW), and 377-379 (DPW). The interval 274–379 (DPWGGPAPMA…TPAPAFSDPW (106 aa)) is 8 X 3 AA repeats of [ED]-P-W. The segment covering 297 to 314 (GGPPVPPAADPWGGPAPT) has biased composition (pro residues). Low complexity predominate over residues 332 to 368 (DPWGGTPAPAAGEGPTPDPWGSSDGGVPVSGPSASDP). Position 382 is a phosphoserine; by CDK1 (Ser-382). Residues 402-411 (DEFSDFDRLR) carry the [DE]-X(1,2)-F-X-X-[FL]-X-X-X-R motif motif. Ser-419, Ser-420, Ser-435, Ser-447, and Ser-454 each carry phosphoserine. Residues 448 to 576 (LAEAVGSPPP…PAPNTNPFLL (129 aa)) form a disordered region. Residues 454-468 (SPPPAATPTPTPPTR) are compositionally biased toward pro residues. Residues Thr-460, Thr-464, and Thr-470 each carry the phosphothreonine modification. A Phosphoserine modification is found at Ser-473. Residue Thr-494 is modified to Phosphothreonine. A run of 2 repeats spans residues 502–504 (NPF) and 518–520 (NPF). The segment at 502 to 574 (NPFLPGGGPA…GPPAPNTNPF (73 aa)) is 3 X 3 AA repeats of N-P-F. Position 534 is an omega-N-methylarginine (Arg-534). Pro residues predominate over residues 557–570 (GLPPMMPPGPPAPN). The stretch at 572–574 (NPF) is repeat 3.

It belongs to the epsin family. Monomer. Binds clathrin, ZBTB16/ZNF145 and ITSN1. Binds ubiquitinated proteins. Binds AP2A1 and AP2A2. Interacts with RALBP1 in a complex also containing NUMB and TFAP2A during interphase and mitosis. Interacts with AP2B1. Interacts with UBQLN2. Interacts with REPS2; the interaction is direct. Interacts with EPS15; the interaction is direct. Interacts with ENTREP1. In terms of processing, phosphorylated on serine and/or threonine residues in mitotic cells. Phosphorylation reduces interaction with REPS2, AP-2 and the membrane fraction. Depolarization of synaptosomes results in dephosphorylation. Post-translationally, ubiquitinated.

It localises to the cytoplasm. The protein resides in the cell membrane. Its subcellular location is the nucleus. The protein localises to the membrane. It is found in the clathrin-coated pit. Binds to membranes enriched in phosphatidylinositol 4,5-bisphosphate (PtdIns(4,5)P2). Modifies membrane curvature and facilitates the formation of clathrin-coated invaginations. Regulates receptor-mediated endocytosis. The polypeptide is Epsin-1 (EPN1) (Homo sapiens (Human)).